The primary structure comprises 176 residues: Cytochrome c oxidase subunit 4 isoform 2, mitochondrial (176 aa).

The N-terminal 28 residues, M1 to M28, are a transit peptide targeting the mitochondrion. The Mitochondrial matrix segment spans residues A29 to S106. Residues E107–Y132 traverse the membrane as a helical segment. Topologically, residues V133–K176 are mitochondrial intermembrane.

It belongs to the cytochrome c oxidase IV family. Component of the cytochrome c oxidase (complex IV, CIV), a multisubunit enzyme composed of 14 subunits. The complex is composed of a catalytic core of 3 subunits MT-CO1, MT-CO2 and MT-CO3, encoded in the mitochondrial DNA, and 11 supernumerary subunits COX4I, COX5A, COX5B, COX6A, COX6B, COX6C, COX7A, COX7B, COX7C, COX8 and NDUFA4, which are encoded in the nuclear genome. The complex exists as a monomer or a dimer and forms supercomplexes (SCs) in the inner mitochondrial membrane with NADH-ubiquinone oxidoreductase (complex I, CI) and ubiquinol-cytochrome c oxidoreductase (cytochrome b-c1 complex, complex III, CIII), resulting in different assemblies (supercomplex SCI(1)III(2)IV(1) and megacomplex MCI(2)III(2)IV(2)).

It localises to the mitochondrion inner membrane. Its pathway is energy metabolism; oxidative phosphorylation. Its function is as follows. Component of the cytochrome c oxidase, the last enzyme in the mitochondrial electron transport chain which drives oxidative phosphorylation. The respiratory chain contains 3 multisubunit complexes succinate dehydrogenase (complex II, CII), ubiquinol-cytochrome c oxidoreductase (cytochrome b-c1 complex, complex III, CIII) and cytochrome c oxidase (complex IV, CIV), that cooperate to transfer electrons derived from NADH and succinate to molecular oxygen, creating an electrochemical gradient over the inner membrane that drives transmembrane transport and the ATP synthase. Cytochrome c oxidase is the component of the respiratory chain that catalyzes the reduction of oxygen to water. Electrons originating from reduced cytochrome c in the intermembrane space (IMS) are transferred via the dinuclear copper A center (CU(A)) of subunit 2 and heme A of subunit 1 to the active site in subunit 1, a binuclear center (BNC) formed by heme A3 and copper B (CU(B)). The BNC reduces molecular oxygen to 2 water molecules using 4 electrons from cytochrome c in the IMS and 4 protons from the mitochondrial matrix. The sequence is that of Cytochrome c oxidase subunit 4 isoform 2, mitochondrial from Thunnus obesus (Bigeye tuna).